Reading from the N-terminus, the 457-residue chain is Transmembrane protease serine 5 (457 aa).

Residues 1–21 (MSLMLDDQPPMEAQYAEEGPG) form a disordered region. The Cytoplasmic segment spans residues 1 to 49 (MSLMLDDQPPMEAQYAEEGPGPGIFRAEPGDQQHPISQAVCWRSMRRGC). The chain crosses the membrane as a helical; Signal-anchor for type II membrane protein span at residues 50–70 (AVLGALGLLAGAGVGSWLLVL). Residues 71–457 (YLCPAASQPI…IHDTAQDSLL (387 aa)) lie on the Extracellular side of the membrane. Positions 112–207 (FRINSEDFLL…SGQVVSLRCS (96 aa)) constitute an SRCR domain. 7 cysteine pairs are disulfide-bonded: Cys-135–Cys-196, Cys-148–Cys-206, Cys-209–Cys-328, Cys-243–Cys-259, Cys-342–Cys-411, Cys-374–Cys-390, and Cys-401–Cys-429. Asn-163, Asn-170, and Asn-195 each carry an N-linked (GlcNAc...) asparagine glycan. Residues 218–453 (IVGGQSVAPG…FLDWIHDTAQ (236 aa)) form the Peptidase S1 domain. Active-site charge relay system residues include His-258 and Asp-308. Asn-319 and Asn-375 each carry an N-linked (GlcNAc...) asparagine glycan. The active-site Charge relay system is the Ser-405.

It belongs to the peptidase S1 family. As to expression, brain-specific. Predominantly expressed in neurons, in their axons, and at the synapses of motoneurons in the spinal cord.

Its subcellular location is the cell membrane. Its function is as follows. May play a role in hearing. This chain is Transmembrane protease serine 5 (TMPRSS5), found in Homo sapiens (Human).